Reading from the N-terminus, the 406-residue chain is Zinc finger protein 793 (406 aa).

Positions 8-79 constitute a KRAB domain; the sequence is VSFKDVVVGF…EAACPGCHCW (72 aa). C2H2-type zinc fingers lie at residues 227–249, 255–277, 283–305, 311–333, 339–361, and 367–389; these read HVCS…QRSH, YGCT…QRIH, FECF…QRTH, FVCS…RKMH, YRCR…WRTH, and YGCN…QKIH.

This sequence belongs to the krueppel C2H2-type zinc-finger protein family.

Its subcellular location is the nucleus. In terms of biological role, may be involved in transcriptional regulation. The protein is Zinc finger protein 793 (ZNF793) of Homo sapiens (Human).